We begin with the raw amino-acid sequence, 714 residues long: Polyribonucleotide nucleotidyltransferase (714 aa).

2 residues coordinate Mg(2+): D488 and D494. The KH domain maps to 555 to 614 (PRIEVMNIPTDKIRDVIGSGGKVIREIVEKTGAKINIEDDGTVKIASSNGKEIEAAKKWI). One can recognise an S1 motif domain in the interval 624 to 692 (GEIYEGTVVK…ERGKVRLSMK (69 aa)).

The protein belongs to the polyribonucleotide nucleotidyltransferase family. Requires Mg(2+) as cofactor.

It localises to the cytoplasm. It catalyses the reaction RNA(n+1) + phosphate = RNA(n) + a ribonucleoside 5'-diphosphate. Its function is as follows. Involved in mRNA degradation. Catalyzes the phosphorolysis of single-stranded polyribonucleotides processively in the 3'- to 5'-direction. In Brucella abortus biovar 1 (strain 9-941), this protein is Polyribonucleotide nucleotidyltransferase.